The primary structure comprises 274 residues: Dermonecrotic toxin SdSicTox-betaIIB1bix (274 aa).

His-5 is a catalytic residue. Glu-25 and Asp-27 together coordinate Mg(2+). His-41 (nucleophile) is an active-site residue. Intrachain disulfides connect Cys-45–Cys-51 and Cys-47–Cys-190. Asp-85 is a Mg(2+) binding site.

It belongs to the arthropod phospholipase D family. Class II subfamily. It depends on Mg(2+) as a cofactor. Expressed by the venom gland.

It is found in the secreted. The catalysed reaction is an N-(acyl)-sphingosylphosphocholine = an N-(acyl)-sphingosyl-1,3-cyclic phosphate + choline. The enzyme catalyses an N-(acyl)-sphingosylphosphoethanolamine = an N-(acyl)-sphingosyl-1,3-cyclic phosphate + ethanolamine. It carries out the reaction a 1-acyl-sn-glycero-3-phosphocholine = a 1-acyl-sn-glycero-2,3-cyclic phosphate + choline. It catalyses the reaction a 1-acyl-sn-glycero-3-phosphoethanolamine = a 1-acyl-sn-glycero-2,3-cyclic phosphate + ethanolamine. Functionally, dermonecrotic toxins cleave the phosphodiester linkage between the phosphate and headgroup of certain phospholipids (sphingolipid and lysolipid substrates), forming an alcohol (often choline) and a cyclic phosphate. This toxin acts on sphingomyelin (SM). It may also act on ceramide phosphoethanolamine (CPE), lysophosphatidylcholine (LPC) and lysophosphatidylethanolamine (LPE), but not on lysophosphatidylserine (LPS), and lysophosphatidylglycerol (LPG). It acts by transphosphatidylation, releasing exclusively cyclic phosphate products as second products. Induces dermonecrosis, hemolysis, increased vascular permeability, edema, inflammatory response, and platelet aggregation. The chain is Dermonecrotic toxin SdSicTox-betaIIB1bix from Sicarius cf. damarensis (strain GJB-2008) (Six-eyed sand spider).